Reading from the N-terminus, the 366-residue chain is Polyprenyl transferase ausN (366 aa).

8 helical membrane-spanning segments follow: residues 97-117, 121-141, 164-184, 215-235, 239-259, 287-307, 308-328, and 346-366; these read VVGIAYSAATAPTKLPLDLLL, LLLTLWSFILRSAGCAWNDLI, LPTATIFTACLFALGCSLFLF, LILVNIAWAIPMAMHSLGVEP, ILSSICLCVFIATVIVLIDLV, LAYSLFAISTLALLFGGLLGG, LRAPFVVFSVGGHIVGFWTFL, and SCLMASIFWLLGLGIEYAVRV.

The protein belongs to the UbiA prenyltransferase family. Requires Mg(2+) as cofactor.

It localises to the membrane. The catalysed reaction is 3,5-dimethylorsellinate + (2E,6E)-farnesyl diphosphate = (3R)-3-farnesyl-6-hydroxy-2,3,5-trimethyl-4-oxocyclohexa-1,5-diene-1-carboxylate + diphosphate + H(+). The protein operates within secondary metabolite biosynthesis; terpenoid biosynthesis. In terms of biological role, polyprenyl transferase; part of the gene cluster that mediates the biosynthesis of calidodehydroaustin, a fungal meroterpenoid. The first step of the pathway is the synthesis of 3,5-dimethylorsellinic acid by the polyketide synthase ausA. 3,5-dimethylorsellinic acid is then prenylated by the polyprenyl transferase ausN. Further epoxidation by the FAD-dependent monooxygenase ausM and cyclization by the probable terpene cyclase ausL lead to the formation of protoaustinoid A. Protoaustinoid A is then oxidized to spiro-lactone preaustinoid A3 by the combined action of the FAD-binding monooxygenases ausB and ausC, and the dioxygenase ausE. Acid-catalyzed keto-rearrangement and ring contraction of the tetraketide portion of preaustinoid A3 by ausJ lead to the formation of preaustinoid A4. The aldo-keto reductase ausK, with the help of ausH, is involved in the next step by transforming preaustinoid A4 into isoaustinone which is in turn hydroxylated by the P450 monooxygenase ausI to form austinolide. The cytochrome P450 monooxygenase ausG modifies austinolide to austinol. Austinol is further acetylated to austin by the O-acetyltransferase ausP, which spontaneously changes to dehydroaustin. The cytochrome P450 monooxygenase ausR then converts dehydroaustin is into 7-dehydrodehydroaustin. The hydroxylation catalyzed by ausR permits the O-acetyltransferase ausQ to add an additional acetyl group to the molecule, leading to the formation of acetoxydehydroaustin. The short chain dehydrogenase ausT catalyzes the reduction of the double bond present between carbon atoms 1 and 2 to convert 7-dehydrodehydroaustin into 1,2-dihydro-7-hydroxydehydroaustin. AusQ catalyzes not only an acetylation reaction but also the addition of the PKS ausV diketide product to 1,2-dihydro-7-hydroxydehydroaustin, forming precalidodehydroaustin. Finally, the iron/alpha-ketoglutarate-dependent dioxygenase converts precalidodehydroaustin into calidodehydroaustin. The protein is Polyprenyl transferase ausN of Aspergillus calidoustus.